The following is a 1296-amino-acid chain: MAAADAEQAVLAKQETKQDCCMKTELLREDTPMAADEGSTEKQEGETPMAADGETNGSCEKSGDPSHLNAPKHTQENTRASPQEGTNRVSRVAENGVSERDTEVGKQNHVTADDFMQTSVIGSNGYFLNKPALQGQPLRTPNILTSSLPGHAAKTLPGGASKCRTLSALPQTPTTAPTVPGEGSADTEDRKPTASGTDVRVHRARKTMPKSILGLHAASKDHREVQDHKEPKEDINRNISECGRQQLLPTFPALHQSLPQNQCYMATTKSQTACLPFVLAAAVSRKKKRRMGTYSLVPKKKTKVLKQRTVIEMFKSITHSTVGAKGEKALDDSALHVNGESLEMDSEDEDSDELEDDEDHGAEQAAAFPTEDSRTSKESMSETDRAAKMDGDSEEEQESPDTGEDEDGGDESDLSSESSIKKKFLKRRGKTDSPWIKPARKRRRRSRKKPSSMLGSEACKSSPGSMEQAALGDSAGYMEVSLDSLDLRVRGILSSQTENEGLASGPDVLGTDGLQEVPLCSCRMETPKSREISTLANNQCMATESVDHELGRCTNSVVKYELMRPSNKAPLLVLCEDHRGRMVKHQCCPGCGYFCTAGNFMECQPESSISHRFHKDCASRVNNASYCPHCGEEASKAKEVTIAKADTTSTVTLAPGQEKSLAAEGRADTTTGSIAGAPEDERSQSTAPQAPECFDPAGPAGLVRPTSGLSQGPGKETLESALIALDSEKPKKLRFHPKQLYFSARQGELQKVLLMLVDGIDPNFKMEHQSKRSPLHAAAEAGHVDICHMLVQAGANIDTCSEDQRTPLMEAAENNHLDAVKYLIKAGAQVDPKDAEGSTCLHLAAKKGHYDVVQYLLSNGQMDVNCQDDGGWTPMIWATEYKHVELVKLLLSKGSDINIRDNEENICLHWAAFSGCVDIAEILLAAKCDLHAVNIHGDSPLHIAARENRYDCVVLFLSRDSDVTLKNKEGETPLQCASLSSQVWSALQMSKALRDSAPDKPVAVEKTVSRDIARGYERIPIPCVNAVDSELCPTNYKYVSQNCVTSPMNIDRNITHLQYCVCVDDCSSSTCMCGQLSMRCWYDKDGRLLPEFNMAEPPLIFECNHACSCWRNCRNRVVQNGLRARLQLYRTQDMGWGVRSLQDIPLGTFVCEYVGELISDSEADVREEDSYLFDLDNKDGEVYCIDARFYGNVSRFINHHCEPNLVPVRVFMSHQDLRFPRIAFFSTRLIQAGEQLGFDYGERFWDVKGKLFSCRCGSSKCRHSSAALAQRQASAAQEPQENGLPDTSSAAAADPL.

Disordered stretches follow at residues 1 to 111 (MAAA…NHVT) and 170 to 200 (PQTP…TDVR). Residue Ala-2 is modified to N-acetylalanine. Residues 14 to 31 (QETKQDCCMKTELLREDT) show a composition bias toward basic and acidic residues. Lys-23 is covalently cross-linked (Glycyl lysine isopeptide (Lys-Gly) (interchain with G-Cter in SUMO1); alternate). Lys-23 participates in a covalent cross-link: Glycyl lysine isopeptide (Lys-Gly) (interchain with G-Cter in SUMO2); alternate. The segment covering 77 to 89 (NTRASPQEGTNRV) has biased composition (polar residues). Positions 97–106 (VSERDTEVGK) are enriched in basic and acidic residues. Glycyl lysine isopeptide (Lys-Gly) (interchain with G-Cter in SUMO2) cross-links involve residues Lys-191, Lys-229, Lys-232, Lys-315, and Lys-325. Residues 341 to 470 (SLEMDSEDED…SSPGSMEQAA (130 aa)) are disordered. The span at 342 to 360 (LEMDSEDEDSDELEDDEDH) shows a compositional bias: acidic residues. A compositionally biased stretch (basic and acidic residues) spans 371-391 (EDSRTSKESMSETDRAAKMDG). Residues 392–414 (DSEEEQESPDTGEDEDGGDESDL) show a composition bias toward acidic residues. A Glycyl lysine isopeptide (Lys-Gly) (interchain with G-Cter in SUMO2) cross-link involves residue Lys-430. Residue Ser-433 is modified to Phosphoserine. Positions 438-450 (PARKRRRRSRKKP) are enriched in basic residues. Ser-481 bears the Phosphoserine mark. Residues Lys-559, Lys-644, Lys-659, and Lys-729 each participate in a glycyl lysine isopeptide (Lys-Gly) (interchain with G-Cter in SUMO2) cross-link. The interval 653-714 (LAPGQEKSLA…PTSGLSQGPG (62 aa)) is disordered. ANK repeat units follow at residues 735–764 (FHPK…DPNF), 770–799 (SKRS…NIDT), 803–832 (DQRT…QVDP), 836–866 (EGST…DVNC), 870–899 (GGWT…DINI), 903–932 (EENI…DLHA), 936–965 (HGDS…DVTL), and 969–1002 (EGET…DKPV). Residues 903–905 (EEN) are histone H3K9me binding. Ser-1046 bears the Phosphoserine mark. Positions 1058–1121 (QYCVCVDDCS…NCRNRVVQNG (64 aa)) constitute a Pre-SET domain. The Zn(2+) site is built by Cys-1060, Cys-1062, Cys-1066, Cys-1071, Cys-1073, Cys-1103, Cys-1107, Cys-1109, and Cys-1113. Residues 1124–1241 (ARLQLYRTQD…AGEQLGFDYG (118 aa)) enclose the SET domain. S-adenosyl-L-methionine-binding positions include 1134–1136 (MGW), Tyr-1171, and 1198–1199 (NH). The interval 1160–1179 (DSEADVREEDSYLFDLDNKD) is interaction with histone H3. Cys-1201 contacts Zn(2+). An interaction with histone H3 region spans residues 1240–1243 (YGER). Cys-1254 provides a ligand contact to Zn(2+). Arg-1255 contacts S-adenosyl-L-methionine. Positions 1256 and 1261 each coordinate Zn(2+). A disordered region spans residues 1271–1296 (RQASAAQEPQENGLPDTSSAAAADPL).

It belongs to the class V-like SAM-binding methyltransferase superfamily. As to quaternary structure, interacts with WIZ. Part of the E2F6.com-1 complex in G0 phase composed of E2F6, MGA, MAX, TFDP1, CBX3, BAT8, EHMT1, RING1, RNF2, MBLR, L3MBTL2 and YAF2. Interacts with MPHOSPH8. Interacts with CDYL. Interacts with REST only in the presence of CDYL. Part of a complex containing at least CDYL, REST, WIZ, SETB1, EHMT1 and EHMT2. Heterodimer; heterodimerizes with EHMT2. Interacts (via ANK repeats) with RELA (when monomethylated at 'Lys-310'). Interacts with Baz2b. In terms of tissue distribution, ubiquitous.

It is found in the nucleus. Its subcellular location is the chromosome. The catalysed reaction is N(6)-methyl-L-lysyl(9)-[histone H3] + S-adenosyl-L-methionine = N(6),N(6)-dimethyl-L-lysyl(9)-[histone H3] + S-adenosyl-L-homocysteine + H(+). It carries out the reaction L-lysyl(9)-[histone H3] + S-adenosyl-L-methionine = N(6)-methyl-L-lysyl(9)-[histone H3] + S-adenosyl-L-homocysteine + H(+). Its activity is regulated as follows. Methyltransferase activity is inhibited by BIX-01294. Efficiently inhibited by compound E72, a BIX-01294 derivative in which the diazepane ring and the benzyl are replaced with a 3-dimethylaminopropyl and a 5-aminopentyl group at sites B and C, respectively. Its function is as follows. Histone methyltransferase that specifically mono- and dimethylates 'Lys-9' of histone H3 (H3K9me1 and H3K9me2, respectively) in euchromatin. H3K9me represents a specific tag for epigenetic transcriptional repression by recruiting HP1 proteins to methylated histones. Also weakly methylates 'Lys-27' of histone H3 (H3K27me). Also required for DNA methylation, the histone methyltransferase activity is not required for DNA methylation, suggesting that these 2 activities function independently. Probably targeted to histone H3 by different DNA-binding proteins like E2F6, MGA, MAX and/or DP1. During G0 phase, it probably contributes to silencing of MYC- and E2F-responsive genes, suggesting a role in G0/G1 transition in cell cycle. In addition to the histone methyltransferase activity, also methylates non-histone proteins: mediates dimethylation of 'Lys-373' of p53/TP53. Represses the expression of mitochondrial function-related genes, perhaps by occupying their promoter regions, working in concert with probable chromatin reader Baz2b. This is Histone-lysine N-methyltransferase EHMT1 (Ehmt1) from Mus musculus (Mouse).